The primary structure comprises 539 residues: Protein Wnt-4 (539 aa).

Positions 1 to 21 (MPSPTGVFVLMILTHLSFGLG) are cleaved as a signal peptide. The disordered stretch occupies residues 34–77 (QNGDLDSSNPAIHHQQHQQHQQHQQHQQHQSNHNLNNGNMNSTI). Low complexity predominate over residues 51-74 (QQHQQHQQHQQHQSNHNLNNGNMN). Asn-74 and Asn-284 each carry an N-linked (GlcNAc...) asparagine glycan. Cystine bridges form between Cys-274-Cys-285, Cys-322-Cys-330, Cys-332-Cys-349, Cys-397-Cys-411, and Cys-399-Cys-406. A lipid anchor (O-palmitoleoyl serine; by PORCN) is attached at Ser-403. An N-linked (GlcNAc...) asparagine glycan is attached at Asn-419. The tract at residues 436-463 (APNQRSMRQVSSSRMKKPKQRRKKPQQS) is disordered. Residues 439–448 (QRSMRQVSSS) show a composition bias toward low complexity. Residues 449 to 460 (RMKKPKQRRKKP) are compositionally biased toward basic residues. 6 cysteine pairs are disulfide-bonded: Cys-478–Cys-497, Cys-486–Cys-492, Cys-496–Cys-538, Cys-512–Cys-529, Cys-514–Cys-526, and Cys-521–Cys-522.

It belongs to the Wnt family. Post-translationally, palmitoleoylated by porcupine. The lipid group functions as a sorting signal, targeting the ligand to polarized vesicles that transport Wnt4 to unique sites at the cell surface. Depalmitoleoylated by notum, leading to inhibit Wnt signaling pathway.

It is found in the secreted. The protein resides in the extracellular space. It localises to the extracellular matrix. Functionally, binds as a ligand to a family of frizzled seven-transmembrane receptors and acts through a cascade of genes on the nucleus. Acts downstream of homeotic complex genes in the visceral mesoderm and is required for embryonic segmentation. Also required for cell movement and FAK regulation during ovarian morphogenesis. In Drosophila melanogaster (Fruit fly), this protein is Protein Wnt-4 (Wnt4).